The primary structure comprises 150 residues: Transthyretin (150 aa).

Positions Met-1–Ala-20 are cleaved as a signal peptide. Cys-33 carries the post-translational modification Sulfocysteine. Positions 38, 77, and 140 each coordinate L-thyroxine.

This sequence belongs to the transthyretin family. As to quaternary structure, homotetramer. Dimer of dimers. In the homotetramer, subunits assemble around a central channel that can accommodate two ligand molecules. Interacts with RBP4. In terms of processing, sulfonation of the reactive cysteine Cys-33 enhances the stability of the native conformation of TTR, avoiding misassembly of the protein leading to amyloid formation. Detected in choroid plexus (at protein level). Detected in choroid plexus.

It localises to the secreted. Its function is as follows. Thyroid hormone-binding protein. Probably transports thyroxine from the bloodstream to the brain. This is Transthyretin (TTR) from Tiliqua rugosa (Shingleback lizard).